We begin with the raw amino-acid sequence, 329 residues long: NADH-quinone oxidoreductase subunit H (329 aa).

9 helical membrane passes run Leu-9 to Ile-29, Gly-42 to Phe-62, Phe-75 to Ile-95, Ile-117 to Gly-137, Ile-154 to Val-174, Gly-188 to Ala-208, Leu-238 to Ile-258, Trp-269 to Trp-291, and Trp-309 to Ile-329.

The protein belongs to the complex I subunit 1 family. In terms of assembly, NDH-1 is composed of 14 different subunits. Subunits NuoA, H, J, K, L, M, N constitute the membrane sector of the complex.

The protein resides in the cell inner membrane. The enzyme catalyses a quinone + NADH + 5 H(+)(in) = a quinol + NAD(+) + 4 H(+)(out). Its function is as follows. NDH-1 shuttles electrons from NADH, via FMN and iron-sulfur (Fe-S) centers, to quinones in the respiratory chain. The immediate electron acceptor for the enzyme in this species is believed to be ubiquinone. Couples the redox reaction to proton translocation (for every two electrons transferred, four hydrogen ions are translocated across the cytoplasmic membrane), and thus conserves the redox energy in a proton gradient. This subunit may bind ubiquinone. In Helicobacter pylori (strain ATCC 700392 / 26695) (Campylobacter pylori), this protein is NADH-quinone oxidoreductase subunit H.